The sequence spans 423 residues: Mannan endo-1,4-beta-mannosidase (423 aa).

A signal peptide spans M1–G27. The GH26 domain occupies M56–R409. 3 residues coordinate substrate: E121, H143, and W162. E212 acts as the Proton donor in catalysis. Substrate contacts are provided by W217 and Y285. E320 serves as the catalytic Nucleophile. Substrate-binding positions include W360–R361 and H377.

The protein belongs to the glycosyl hydrolase 26 family. Homodimer.

The catalysed reaction is Random hydrolysis of (1-&gt;4)-beta-D-mannosidic linkages in mannans, galactomannans and glucomannans.. Catalyzes the endo hydrolysis of beta-1,4-linked mannan and galactomannan, but displays little activity towards other polysaccharides located in the plant cell wall. Preferentially hydrolyzes the larger oligosaccharides and has greater activity against non-substituted polysaccharides. It displays tight specificity for mannose at both the -2 and the -1 subsites. Appears to act in synergy with alpha-galactosidase (AgaA) to elicit hydrolysis of galactomannan. The protein is Mannan endo-1,4-beta-mannosidase of Cellvibrio japonicus (strain Ueda107) (Pseudomonas fluorescens subsp. cellulosa).